We begin with the raw amino-acid sequence, 341 residues long: Tryptophan--tRNA ligase (341 aa).

ATP-binding positions include 11-13 (RPT) and 19-20 (GH). The 'HIGH' region signature appears at 12-20 (PTGKLHIGH). Asp-140 is a binding site for L-tryptophan. Residues 152–154 (GTD), Leu-194, and 202–206 (KMSKS) each bind ATP. The 'KMSKS' region signature appears at 202 to 206 (KMSKS).

Belongs to the class-I aminoacyl-tRNA synthetase family. In terms of assembly, homodimer.

The protein localises to the cytoplasm. The enzyme catalyses tRNA(Trp) + L-tryptophan + ATP = L-tryptophyl-tRNA(Trp) + AMP + diphosphate + H(+). Catalyzes the attachment of tryptophan to tRNA(Trp). This is Tryptophan--tRNA ligase from Streptococcus agalactiae serotype III (strain NEM316).